Reading from the N-terminus, the 295-residue chain is 33 kDa chaperonin (295 aa).

Cystine bridges form between Cys-237-Cys-239 and Cys-270-Cys-273.

The protein belongs to the HSP33 family. Under oxidizing conditions two disulfide bonds are formed involving the reactive cysteines. Under reducing conditions zinc is bound to the reactive cysteines and the protein is inactive.

The protein resides in the cytoplasm. In terms of biological role, redox regulated molecular chaperone. Protects both thermally unfolding and oxidatively damaged proteins from irreversible aggregation. Plays an important role in the bacterial defense system toward oxidative stress. In Lactiplantibacillus plantarum (strain ATCC BAA-793 / NCIMB 8826 / WCFS1) (Lactobacillus plantarum), this protein is 33 kDa chaperonin.